The following is a 138-amino-acid chain: Putative pre-16S rRNA nuclease (138 aa).

Belongs to the YqgF nuclease family.

The protein localises to the cytoplasm. Its function is as follows. Could be a nuclease involved in processing of the 5'-end of pre-16S rRNA. This chain is Putative pre-16S rRNA nuclease, found in Salmonella arizonae (strain ATCC BAA-731 / CDC346-86 / RSK2980).